An 83-amino-acid chain; its full sequence is Arminin 3b (83 aa).

An N-terminal signal peptide occupies residues 1–18 (MKIVFAILFLTFIALTYA). A propeptide spanning residues 19 to 57 (RSFEDLKEEIKNEIEKEIFDDLEEESDELDNNVKKFNDA) is cleaved from the precursor. Ser-80 is modified (serine amide).

Belongs to the arminin family. Expressed in entodermal epithelium along the body column.

Its subcellular location is the secreted. It localises to the target cell membrane. Antimicrobial peptide with a broad-spectrum antimicrobial activity. Keeps its antibacterial activity under a wide range of salt concentrations that mimic physiological conditions of human blood, which is surprising, since Hydra is an obligate freshwater animal with nearly no salt tolerance. Does not affect red blood cells. This is Arminin 3b from Hydra vulgaris (Hydra).